The following is an 833-amino-acid chain: Leucine--tRNA ligase (833 aa).

The 'HIGH' region signature appears at 41–52 (PYPSGAGLHVGH). The 'KMSKS' region signature appears at 610 to 614 (KMSKS). K613 is an ATP binding site.

This sequence belongs to the class-I aminoacyl-tRNA synthetase family.

Its subcellular location is the cytoplasm. It catalyses the reaction tRNA(Leu) + L-leucine + ATP = L-leucyl-tRNA(Leu) + AMP + diphosphate. This Streptococcus equi subsp. zooepidemicus (strain H70) protein is Leucine--tRNA ligase.